A 338-amino-acid chain; its full sequence is Ketol-acid reductoisomerase (NADP(+)) (338 aa).

A KARI N-terminal Rossmann domain is found at 1–181; sequence MQVYYDKDCD…GGGRTGIIET (181 aa). NADP(+)-binding positions include 24 to 27, Arg-47, Ser-50, Ser-52, and 82 to 85; these read YGSQ and DEFQ. The active site involves His-107. Gly-133 provides a ligand contact to NADP(+). One can recognise a KARI C-terminal knotted domain in the interval 182 to 327; it reads TFKDETETDL…EKLRGMMPWI (146 aa). Asp-190, Glu-194, Glu-226, and Glu-230 together coordinate Mg(2+). Ser-251 contacts substrate.

The protein belongs to the ketol-acid reductoisomerase family. The cofactor is Mg(2+).

The catalysed reaction is (2R)-2,3-dihydroxy-3-methylbutanoate + NADP(+) = (2S)-2-acetolactate + NADPH + H(+). It carries out the reaction (2R,3R)-2,3-dihydroxy-3-methylpentanoate + NADP(+) = (S)-2-ethyl-2-hydroxy-3-oxobutanoate + NADPH + H(+). It participates in amino-acid biosynthesis; L-isoleucine biosynthesis; L-isoleucine from 2-oxobutanoate: step 2/4. It functions in the pathway amino-acid biosynthesis; L-valine biosynthesis; L-valine from pyruvate: step 2/4. Functionally, involved in the biosynthesis of branched-chain amino acids (BCAA). Catalyzes an alkyl-migration followed by a ketol-acid reduction of (S)-2-acetolactate (S2AL) to yield (R)-2,3-dihydroxy-isovalerate. In the isomerase reaction, S2AL is rearranged via a Mg-dependent methyl migration to produce 3-hydroxy-3-methyl-2-ketobutyrate (HMKB). In the reductase reaction, this 2-ketoacid undergoes a metal-dependent reduction by NADPH to yield (R)-2,3-dihydroxy-isovalerate. This Alcanivorax borkumensis (strain ATCC 700651 / DSM 11573 / NCIMB 13689 / SK2) protein is Ketol-acid reductoisomerase (NADP(+)).